Here is a 249-residue protein sequence, read N- to C-terminus: Aspartate/glutamate leucyltransferase (249 aa).

It belongs to the R-transferase family. Bpt subfamily.

The protein resides in the cytoplasm. The enzyme catalyses N-terminal L-glutamyl-[protein] + L-leucyl-tRNA(Leu) = N-terminal L-leucyl-L-glutamyl-[protein] + tRNA(Leu) + H(+). The catalysed reaction is N-terminal L-aspartyl-[protein] + L-leucyl-tRNA(Leu) = N-terminal L-leucyl-L-aspartyl-[protein] + tRNA(Leu) + H(+). Functions in the N-end rule pathway of protein degradation where it conjugates Leu from its aminoacyl-tRNA to the N-termini of proteins containing an N-terminal aspartate or glutamate. This chain is Aspartate/glutamate leucyltransferase, found in Brucella abortus (strain 2308).